Consider the following 188-residue polypeptide: Pyridoxal 5'-phosphate synthase subunit PdxT (188 aa).

47 to 49 (GES) provides a ligand contact to L-glutamine. Cysteine 79 functions as the Nucleophile in the catalytic mechanism. Residues arginine 105 and 134–135 (IR) contribute to the L-glutamine site. Residues histidine 170 and glutamate 172 each act as charge relay system in the active site.

It belongs to the glutaminase PdxT/SNO family. In the presence of PdxS, forms a dodecamer of heterodimers. Only shows activity in the heterodimer.

It carries out the reaction aldehydo-D-ribose 5-phosphate + D-glyceraldehyde 3-phosphate + L-glutamine = pyridoxal 5'-phosphate + L-glutamate + phosphate + 3 H2O + H(+). The catalysed reaction is L-glutamine + H2O = L-glutamate + NH4(+). It functions in the pathway cofactor biosynthesis; pyridoxal 5'-phosphate biosynthesis. Its function is as follows. Catalyzes the hydrolysis of glutamine to glutamate and ammonia as part of the biosynthesis of pyridoxal 5'-phosphate. The resulting ammonia molecule is channeled to the active site of PdxS. This Listeria innocua serovar 6a (strain ATCC BAA-680 / CLIP 11262) protein is Pyridoxal 5'-phosphate synthase subunit PdxT.